We begin with the raw amino-acid sequence, 1151 residues long: Protein BREAST CANCER SUSCEPTIBILITY 2 homolog A (1151 aa).

4 BRCA2 repeats span residues 63–97, 116–150, 163–197, and 257–291; these read MPGE…EKVT, TAET…SDKI, FGVS…LEED, and LKVP…DPEL. The tract at residues 408 to 427 is disordered; it reads GFIPRGRQPGRPADQPLVDI.

As to quaternary structure, interacts with RAD51 and DMC1. Interacts with DSS1(I). Expressed in flower buds.

Its function is as follows. Involved in double-strand break repair and/or homologous recombination by mediating RAD51- and DMC1-facilitated DNA repair. Plays an essential role in both somatic and meiotic homologous recombination. Is crucial for the formation of RAD51 and DMC1 foci during male meiotic homologous recombination in prophase I. In Arabidopsis thaliana (Mouse-ear cress), this protein is Protein BREAST CANCER SUSCEPTIBILITY 2 homolog A.